We begin with the raw amino-acid sequence, 880 residues long: MKKLSSSEIRQMYLDFFHEKGHTIVPSASLVPVDDPTLLWINSGVATMKKYFDGSVVPDNPRMTSSQKSIRTNDIENVGRTARHHTLFEMLGNFSVGDYFKKEAISWAWELLTSPKWFGWDPDKLYMTVYPKDTDAAKFWEATGVKPDHIIKVEDNFWDIGQGPSGPDSEIFYDRGEAFNNLADDDPENYPGGENERYLEVWNIVFSQFNHTPEGTYEPLPRKNIDTGMGLERVVSVFQNAKTNFETDLFLPIIHKTEELSDGKHYGDNAQDDVSFKVIADHARAITFAISDGALPSNEGRGYVIRRLIRRAILHGQKLGLKEAFLDQLVPIVGKIMASHYPDVLKNSAYIEKIVASEESRFNETLNDGLNLLNNLIAETKQTGHDTLAGKDAFKLYDTYGFPFELTKEYAGDEDLDVDEAGFEVEMKAQRDRARNARSSAKSMGVQRSLLIDIKTPSEYVGYDELTNVQGTLNDIIVDETLVDHVDSGQAEMIFSKTPFYAEMGGQVADRGVILDDAGEMVAKVTDVQNAPNKQHLHTVEVLKPMRKDATYTLNVDLAFHNKVEKNHTATHLLDQALRDVLGEHTKQAGSLVEPDYLRFDFTHFGQVTDEELAKVEQIVNDKIWAALPVSAIQTDQETGHKMGAIAVFTEKYGKIVRVVSIGDYSIEFDGGTHVKNSSELGLFKIVSETGIGAGTRRIEAVTSKEAFELLAGEEQTLKQVAAQVKAPKLADTPAKVSQLQADLKAEQQNRASLESRLAKQQAGAVFDQVDDVNGTTLIAQQIEVSGMDQLRQLADTWKTKQYSDVLVLGTVIGEKVNLLVAVSDDKVKAGIKAGDLIKAIAPKVGGGGGGRPTLAQAGGKKPAGLPVALKAAHEWLAEQ.

It belongs to the class-II aminoacyl-tRNA synthetase family.

The protein localises to the cytoplasm. The catalysed reaction is tRNA(Ala) + L-alanine + ATP = L-alanyl-tRNA(Ala) + AMP + diphosphate. Catalyzes the attachment of alanine to tRNA(Ala) in a two-step reaction: alanine is first activated by ATP to form Ala-AMP and then transferred to the acceptor end of tRNA(Ala). Also edits incorrectly charged Ser-tRNA(Ala) and Gly-tRNA(Ala) via its editing domain. The chain is Alanine--tRNA ligase (alaS) from Lactiplantibacillus plantarum (strain ATCC BAA-793 / NCIMB 8826 / WCFS1) (Lactobacillus plantarum).